We begin with the raw amino-acid sequence, 949 residues long: RNA polymerase-associated protein RapA (949 aa).

The Helicase ATP-binding domain maps to 164-332 (EVADRIAPRV…FARLRLLDPN (169 aa)). 177-184 (DEVGLGKT) contacts ATP. A DEAH box motif is present at residues 278-281 (DEAH). In terms of domain architecture, Helicase C-terminal spans 474 to 628 (RVEWLIDTLK…TCPTGNALQH (155 aa)).

It belongs to the SNF2/RAD54 helicase family. RapA subfamily. As to quaternary structure, interacts with the RNAP. Has a higher affinity for the core RNAP than for the holoenzyme. Its ATPase activity is stimulated by binding to RNAP.

Its function is as follows. Transcription regulator that activates transcription by stimulating RNA polymerase (RNAP) recycling in case of stress conditions such as supercoiled DNA or high salt concentrations. Probably acts by releasing the RNAP, when it is trapped or immobilized on tightly supercoiled DNA. Does not activate transcription on linear DNA. Probably not involved in DNA repair. The protein is RNA polymerase-associated protein RapA of Stutzerimonas stutzeri (strain A1501) (Pseudomonas stutzeri).